A 339-amino-acid polypeptide reads, in one-letter code: UPF0324 membrane protein SpyM3_0740 (339 aa).

A run of 9 helical transmembrane segments spans residues 7-24 (KLPG…AWYL), 28-50 (FPII…FYHH), 57-79 (GISF…GLNL), 84-106 (AVGM…VAYG), 118-140 (ATLV…APVI), 150-172 (AISV…GQLL), 256-275 (FILF…SLGV), 290-307 (FIVM…LVKL), and 314-336 (AILL…QLSL).

This sequence belongs to the UPF0324 family.

It localises to the cell membrane. The chain is UPF0324 membrane protein SpyM3_0740 from Streptococcus pyogenes serotype M3 (strain ATCC BAA-595 / MGAS315).